Consider the following 438-residue polypeptide: Glutamyl-tRNA reductase (438 aa).

Substrate is bound by residues 49–52 (TCNR), Ser109, 114–116 (EQQ), and Gln120. Cys50 serves as the catalytic Nucleophile. 191–196 (GAGAMA) contributes to the NADP(+) binding site.

This sequence belongs to the glutamyl-tRNA reductase family. In terms of assembly, homodimer.

It carries out the reaction (S)-4-amino-5-oxopentanoate + tRNA(Glu) + NADP(+) = L-glutamyl-tRNA(Glu) + NADPH + H(+). It functions in the pathway porphyrin-containing compound metabolism; protoporphyrin-IX biosynthesis; 5-aminolevulinate from L-glutamyl-tRNA(Glu): step 1/2. In terms of biological role, catalyzes the NADPH-dependent reduction of glutamyl-tRNA(Glu) to glutamate 1-semialdehyde (GSA). In Corynebacterium diphtheriae (strain ATCC 700971 / NCTC 13129 / Biotype gravis), this protein is Glutamyl-tRNA reductase.